A 149-amino-acid polypeptide reads, in one-letter code: Vesicle-associated protein 3-1 (149 aa).

Position 1 is an N-acetylmethionine (M1). S2 bears the N-acetylserine; in Vesicle-associated protein 3-1, N-terminally processed mark. The MSP domain maps to 6–126 (LLEIEPMYLQ…EETKLRVTYV (121 aa)).

Belongs to the VAMP-associated protein (VAP) (TC 9.B.17) family.

Its function is as follows. May play a role in vesicle trafficking. This is Vesicle-associated protein 3-1 (PVA31) from Arabidopsis thaliana (Mouse-ear cress).